The primary structure comprises 45 residues: Large ribosomal subunit protein bL34 (45 aa).

The tract at residues 1 to 45 is disordered; the sequence is MTKRTLGGTSRKRKRVSGFRVRMRSHTGRRVIRTRRKRGRSRLAV. The segment covering 10 to 45 has biased composition (basic residues); sequence SRKRKRVSGFRVRMRSHTGRRVIRTRRKRGRSRLAV.

Belongs to the bacterial ribosomal protein bL34 family.

In Parasynechococcus marenigrum (strain WH8102), this protein is Large ribosomal subunit protein bL34.